Reading from the N-terminus, the 274-residue chain is tRNA-cytidine(32) 2-sulfurtransferase (274 aa).

Positions 40–45 match the PP-loop motif motif; it reads SGGKDS. Residues C115, C118, and C206 each contribute to the [4Fe-4S] cluster site.

Belongs to the TtcA family. As to quaternary structure, homodimer. Mg(2+) is required as a cofactor. The cofactor is [4Fe-4S] cluster.

Its subcellular location is the cytoplasm. The catalysed reaction is cytidine(32) in tRNA + S-sulfanyl-L-cysteinyl-[cysteine desulfurase] + AH2 + ATP = 2-thiocytidine(32) in tRNA + L-cysteinyl-[cysteine desulfurase] + A + AMP + diphosphate + H(+). It participates in tRNA modification. Catalyzes the ATP-dependent 2-thiolation of cytidine in position 32 of tRNA, to form 2-thiocytidine (s(2)C32). The sulfur atoms are provided by the cysteine/cysteine desulfurase (IscS) system. This chain is tRNA-cytidine(32) 2-sulfurtransferase, found in Pseudomonas fluorescens (strain SBW25).